Consider the following 128-residue polypeptide: Sulfurtransferase TusD (128 aa).

Cys78 acts as the Cysteine persulfide intermediate in catalysis.

This sequence belongs to the DsrE/TusD family. As to quaternary structure, heterohexamer, formed by a dimer of trimers. The hexameric TusBCD complex contains 2 copies each of TusB, TusC and TusD. The TusBCD complex interacts with TusE.

It localises to the cytoplasm. Functionally, part of a sulfur-relay system required for 2-thiolation of 5-methylaminomethyl-2-thiouridine (mnm(5)s(2)U) at tRNA wobble positions. Accepts sulfur from TusA and transfers it in turn to TusE. The polypeptide is Sulfurtransferase TusD (Salmonella dublin (strain CT_02021853)).